Consider the following 476-residue polypeptide: MNFKSTIGLEVHFELKTKSKIFSPSPVTYGAEQNTETNVIDWAMPGTLPMVNKNVYRLGIMVALATHSHILPTTHFDRKNYFYPDNPKAYQITQFFQPLARDGYIEVEVRGKKKRIGIHEMHIEEDAGKNTHGTNGYSYVDLNRQGVPLLEVVSEPDMEDPEEAYAYLEKLRKIVQFTGASDVKMEEGSMRVDTNISIRPAGQKELGTKVEMKNLNSFDHVRRSLAYEEKRQEQVLLAGGHIQLSTRRFDEATGKTVLERVKEGASDYRYFPEPDIAPDHISQEWIDQIAKELPKSPFDRYDDYVNKFGLKPYDANVLLQTKESSDFFDAAVAAGADPTLAANWMNTQVNGYLNDNRVSLEDIKLTPENLAKMIKLIQDGTISSKIAKKVFAETVANGTDPKKYVEDNGMVQLSDTSVLEPMVKKVVDDNPQSVEDFKNGKDRAIGFLVGQIMKQTRGKANPKMVNKLLNQELQSR.

Belongs to the GatB/GatE family. GatB subfamily. In terms of assembly, heterotrimer of A, B and C subunits.

The enzyme catalyses L-glutamyl-tRNA(Gln) + L-glutamine + ATP + H2O = L-glutaminyl-tRNA(Gln) + L-glutamate + ADP + phosphate + H(+). It catalyses the reaction L-aspartyl-tRNA(Asn) + L-glutamine + ATP + H2O = L-asparaginyl-tRNA(Asn) + L-glutamate + ADP + phosphate + 2 H(+). Its function is as follows. Allows the formation of correctly charged Asn-tRNA(Asn) or Gln-tRNA(Gln) through the transamidation of misacylated Asp-tRNA(Asn) or Glu-tRNA(Gln) in organisms which lack either or both of asparaginyl-tRNA or glutaminyl-tRNA synthetases. The reaction takes place in the presence of glutamine and ATP through an activated phospho-Asp-tRNA(Asn) or phospho-Glu-tRNA(Gln). This Lactobacillus acidophilus (strain ATCC 700396 / NCK56 / N2 / NCFM) protein is Aspartyl/glutamyl-tRNA(Asn/Gln) amidotransferase subunit B.